Consider the following 537-residue polypeptide: MNSWWTYVNRWIFSTNAKDIAILYLLFGLVSGIIGSVFSFIIRMELSAPGSQFLSGNGQLYNVAISAHGILMIFFFIIPALFGAFGNYLVPLMIGAPDVAYPRVNNFTFWLLPPALMLLLISALTEEGPGGGWTVYPPLSSITSHSGPAIDLAILSLQLTGISSTLGSVNLIATMINMRAPGLSLYQMPLFAWAIMITSILLLLTLPVLAGGLFMLFSDRNLNTSFYAPEGGGDPVLYQHLFWFFGHPEVYILIMPAFGVVSHIIPSLAHKPIFGKEGMLWAMLSIALLGLMVWSHHLFTVGLDVDTRAYFSAATMVIAIPTGIKIFSWLATLTGGAIQWSRVPMLYAIGFLILFTIGGLTGVILSNSVLDIAFHDTYFVVAHFHYVLSMGALFGLCGAYYWSPKMFGLMYNETLASIQFWILFIGVNIVFGPQHFLGLNGMPRRIPDYPEAFVGWNFVSSIGSVISILSLFLFMYVMYDQFTSNRVVKTNPYLIPSYFDDNVIFVNEKLGVAQSIEWLLHSPVHEHAFNTLPTKSI.

A helical transmembrane segment spans residues 22–42; that stretch reads ILYLLFGLVSGIIGSVFSFII. Positions 45, 48, and 50 each coordinate Ca(2+). His68 contributes to the Fe(II)-heme a binding site. The next 8 helical transmembrane spans lie at 70-90, 104-124, 152-172, 190-210, 241-261, 279-299, 318-338, and 345-365; these read ILMI…NYLV, VNNF…ISAL, LAIL…VNLI, LFAW…PVLA, LFWF…FGVV, MLWA…HHLF, IAIP…GGAI, and MLYA…GVIL. His247 is a Cu cation binding site. The 1'-histidyl-3'-tyrosine (His-Tyr) cross-link spans 247–251; it reads HPEVY. Tyr251 is a binding site for O2. 2 residues coordinate Cu cation: His296 and His297. Residues His375 and Asp376 each coordinate Mg(2+). 2 consecutive transmembrane segments (helical) span residues 379–399 and 418–438; these read FVVA…LCGA and IQFW…HFLG. Heme a3 is bound at residue His383. Fe(II)-heme a is bound at residue His385. Pro447 lines the Ca(2+) pocket. Residues 458–478 traverse the membrane as a helical segment; it reads FVSSIGSVISILSLFLFMYVM.

It belongs to the heme-copper respiratory oxidase family. Component of the cytochrome c oxidase (complex IV, CIV), a multisubunit enzyme composed of a catalytic core of 3 subunits and several supernumerary subunits. The complex exists as a monomer or a dimer and forms supercomplexes (SCs) in the inner mitochondrial membrane with ubiquinol-cytochrome c oxidoreductase (cytochrome b-c1 complex, complex III, CIII). The cofactor is heme. Requires Cu cation as cofactor.

The protein resides in the mitochondrion inner membrane. The catalysed reaction is 4 Fe(II)-[cytochrome c] + O2 + 8 H(+)(in) = 4 Fe(III)-[cytochrome c] + 2 H2O + 4 H(+)(out). It participates in energy metabolism; oxidative phosphorylation. Functionally, component of the cytochrome c oxidase, the last enzyme in the mitochondrial electron transport chain which drives oxidative phosphorylation. The respiratory chain contains 3 multisubunit complexes succinate dehydrogenase (complex II, CII), ubiquinol-cytochrome c oxidoreductase (cytochrome b-c1 complex, complex III, CIII) and cytochrome c oxidase (complex IV, CIV), that cooperate to transfer electrons derived from NADH and succinate to molecular oxygen, creating an electrochemical gradient over the inner membrane that drives transmembrane transport and the ATP synthase. Cytochrome c oxidase is the component of the respiratory chain that catalyzes the reduction of oxygen to water. Electrons originating from reduced cytochrome c in the intermembrane space (IMS) are transferred via the dinuclear copper A center (CU(A)) of subunit 2 and heme A of subunit 1 to the active site in subunit 1, a binuclear center (BNC) formed by heme A3 and copper B (CU(B)). The BNC reduces molecular oxygen to 2 water molecules using 4 electrons from cytochrome c in the IMS and 4 protons from the mitochondrial matrix. The polypeptide is Cytochrome c oxidase subunit 1 (cox1) (Schizosaccharomyces pombe (strain 972 / ATCC 24843) (Fission yeast)).